The sequence spans 433 residues: Delta-aminolevulinic acid dehydratase, chloroplastic (433 aa).

Residues 1 to 56 constitute a chloroplast transit peptide; it reads MASTFNIPCNAGTIKNFNNSQRNLGFSSNLGINFAKTRFSNCGDSGRIPSQLVVRA. The interval 83–115 is disordered; it reads NAPSAPPVPPTPKAPSGTPSVSPLSLGRRPRRN. The span at 86–95 shows a compositional bias: pro residues; that stretch reads SAPPVPPTPK. Lysine 301 serves as the catalytic Schiff-base intermediate with substrate. 2 residues coordinate 5-aminolevulinate: arginine 311 and lysine 323. Residue glutamate 339 coordinates Mg(2+). The active-site Schiff-base intermediate with substrate is lysine 354. 5-aminolevulinate is bound by residues serine 380 and tyrosine 419.

It belongs to the ALAD family. In terms of assembly, homooctamer. Mg(2+) is required as a cofactor.

It localises to the plastid. It is found in the chloroplast. It carries out the reaction 2 5-aminolevulinate = porphobilinogen + 2 H2O + H(+). The protein operates within porphyrin-containing compound metabolism; protoporphyrin-IX biosynthesis; coproporphyrinogen-III from 5-aminolevulinate: step 1/4. Its function is as follows. Catalyzes an early step in the biosynthesis of tetrapyrroles. Binds two molecules of 5-aminolevulinate per subunit, each at a distinct site, and catalyzes their condensation to form porphobilinogen. The polypeptide is Delta-aminolevulinic acid dehydratase, chloroplastic (HEMB) (Spinacia oleracea (Spinach)).